A 1814-amino-acid polypeptide reads, in one-letter code: U3 small nucleolar RNA-associated protein 10 (1814 aa).

An HEAT 1 repeat occupies leucine 583–lysine 620. 2 helical membrane passes run isoleucine 942–asparagine 962 and alanine 998–methionine 1018. HEAT repeat units lie at residues glutamine 1042–histidine 1079, leucine 1249–glutamate 1286, isoleucine 1293–lysine 1331, and alanine 1770–glutamate 1807.

This sequence belongs to the HEATR1/UTP10 family. As to quaternary structure, component of the ribosomal small subunit (SSU) processome.

The protein localises to the nucleus. Its subcellular location is the nucleolus. The protein resides in the membrane. In terms of biological role, involved in nucleolar processing of pre-18S ribosomal RNA. Involved in ribosome biosynthesis. The chain is U3 small nucleolar RNA-associated protein 10 from Neosartorya fischeri (strain ATCC 1020 / DSM 3700 / CBS 544.65 / FGSC A1164 / JCM 1740 / NRRL 181 / WB 181) (Aspergillus fischerianus).